The following is a 249-amino-acid chain: Triosephosphate isomerase (249 aa).

Positions 12 and 14 each coordinate substrate. Lys-14 is modified (N6-acetyllysine). Tyr-68 is subject to 3'-nitrotyrosine. 2 positions are modified to phosphoserine: Ser-80 and Ser-106. A Glycyl lysine isopeptide (Lys-Gly) (interchain with G-Cter in SUMO1) cross-link involves residue Lys-142. Position 149 is an N6-succinyllysine (Lys-149). N6-acetyllysine; alternate is present on Lys-156. An N6-succinyllysine; alternate modification is found at Lys-156. Ser-159 is modified (phosphoserine). Glu-166 acts as the Proton acceptor in catalysis. Position 173 is a phosphothreonine (Thr-173). At Lys-194 the chain carries N6-acetyllysine; alternate. N6-succinyllysine; alternate is present on Lys-194. An N6-methyllysine; alternate modification is found at Lys-194. At Ser-198 the chain carries Phosphoserine. Position 209 is a 3'-nitrotyrosine (Tyr-209). Position 212 is a phosphoserine (Ser-212). Thr-214 carries the phosphothreonine modification. Position 223 is a phosphoserine (Ser-223). At Lys-238 the chain carries N6-acetyllysine.

It belongs to the triosephosphate isomerase family. In terms of assembly, homodimer.

The protein resides in the cytoplasm. The enzyme catalyses D-glyceraldehyde 3-phosphate = dihydroxyacetone phosphate. It carries out the reaction dihydroxyacetone phosphate = methylglyoxal + phosphate. It functions in the pathway carbohydrate biosynthesis; gluconeogenesis. The protein operates within carbohydrate degradation; glycolysis; D-glyceraldehyde 3-phosphate from glycerone phosphate: step 1/1. Functionally, triosephosphate isomerase is an extremely efficient metabolic enzyme that catalyzes the interconversion between dihydroxyacetone phosphate (DHAP) and D-glyceraldehyde-3-phosphate (G3P) in glycolysis and gluconeogenesis. It is also responsible for the non-negligible production of methylglyoxal a reactive cytotoxic side-product that modifies and can alter proteins, DNA and lipids. The protein is Triosephosphate isomerase of Mesocricetus auratus (Golden hamster).